Reading from the N-terminus, the 686-residue chain is ATP-dependent zinc metalloprotease FtsH 2 (686 aa).

Residues 1–11 (MKKNIKDIFKN) lie on the Cytoplasmic side of the membrane. A helical membrane pass occupies residues 12-32 (FNIFWFCFIFLLLSLLYCLIM). Topologically, residues 33-178 (MEISHQHDNN…LQRIPYQPYF (146 aa)) are extracellular. Residues 179–199 (GFAPFISAVNICILIIIFYFI) traverse the membrane as a helical segment. Residues 200-686 (YNSIEKTSAQ…QKSEKEDCNK (487 aa)) are Cytoplasmic-facing. 272-279 (GPPGVGKT) contributes to the ATP binding site. His-493 contributes to the Zn(2+) binding site. Glu-494 is a catalytic residue. Residues His-497 and Asp-569 each coordinate Zn(2+).

This sequence in the central section; belongs to the AAA ATPase family. The protein in the C-terminal section; belongs to the peptidase M41 family. Homohexamer. Zn(2+) serves as cofactor.

The protein resides in the cell membrane. Functionally, acts as a processive, ATP-dependent zinc metallopeptidase for both cytoplasmic and membrane proteins. Plays a role in the quality control of integral membrane proteins. The chain is ATP-dependent zinc metalloprotease FtsH 2 from Phytoplasma mali (strain AT).